A 357-amino-acid polypeptide reads, in one-letter code: Phenylalanine--tRNA ligase alpha subunit (357 aa).

Mg(2+) is bound at residue Glu-257.

It belongs to the class-II aminoacyl-tRNA synthetase family. Phe-tRNA synthetase alpha subunit type 1 subfamily. As to quaternary structure, tetramer of two alpha and two beta subunits. The cofactor is Mg(2+).

The protein localises to the cytoplasm. It carries out the reaction tRNA(Phe) + L-phenylalanine + ATP = L-phenylalanyl-tRNA(Phe) + AMP + diphosphate + H(+). The chain is Phenylalanine--tRNA ligase alpha subunit from Roseobacter denitrificans (strain ATCC 33942 / OCh 114) (Erythrobacter sp. (strain OCh 114)).